Reading from the N-terminus, the 580-residue chain is mRNA cap guanine-N(7) methyltransferase (580 aa).

Composition is skewed to polar residues over residues 1–17 (MSGSKQGSEKASITSLI) and 25–53 (EATSVSTQNQSPKTQITQTENVEVQNSDL). Residues 1 to 222 (MSGSKQGSEK…PVEAQPYSRL (222 aa)) are disordered. Residues 54-67 (KVTENKPKNTEMKP) show a composition bias toward basic and acidic residues. A compositionally biased stretch (polar residues) spans 69–90 (DPNTNASTTENTPITTSNAQVS). Over residues 102-154 (REPEEAQNRYDRYVPRVDNRRRGEPRVAEVRQDPRYAKYLRQDQEERRIRRPD) the composition is skewed to basic and acidic residues. Acidic residues predominate over residues 191–214 (ESEENGDEQQGDDEEETPGNEEPV). An mRNA cap 0 methyltransferase domain is found at 271–579 (SPIYKLRNFN…FYLGFAFEKL (309 aa)). 280-281 (NN) contributes to the mRNA binding site. Residues Lys284, Cys308, Asp330, Asp376, Gln406, and Tyr411 each coordinate S-adenosyl-L-methionine.

The protein belongs to the class I-like SAM-binding methyltransferase superfamily. mRNA cap 0 methyltransferase family.

Its subcellular location is the nucleus. It carries out the reaction a 5'-end (5'-triphosphoguanosine)-ribonucleoside in mRNA + S-adenosyl-L-methionine = a 5'-end (N(7)-methyl 5'-triphosphoguanosine)-ribonucleoside in mRNA + S-adenosyl-L-homocysteine. Functionally, responsible for methylating the 5'-cap structure of mRNAs. This chain is mRNA cap guanine-N(7) methyltransferase (ABD1), found in Meyerozyma guilliermondii (strain ATCC 6260 / CBS 566 / DSM 6381 / JCM 1539 / NBRC 10279 / NRRL Y-324) (Yeast).